The chain runs to 255 residues: Ribosomal RNA small subunit methyltransferase A (255 aa).

S-adenosyl-L-methionine is bound by residues H12, L14, G39, E60, D81, and N103.

The protein belongs to the class I-like SAM-binding methyltransferase superfamily. rRNA adenine N(6)-methyltransferase family. RsmA subfamily.

It localises to the cytoplasm. The catalysed reaction is adenosine(1518)/adenosine(1519) in 16S rRNA + 4 S-adenosyl-L-methionine = N(6)-dimethyladenosine(1518)/N(6)-dimethyladenosine(1519) in 16S rRNA + 4 S-adenosyl-L-homocysteine + 4 H(+). Specifically dimethylates two adjacent adenosines (A1518 and A1519) in the loop of a conserved hairpin near the 3'-end of 16S rRNA in the 30S particle. May play a critical role in biogenesis of 30S subunits. The sequence is that of Ribosomal RNA small subunit methyltransferase A from Variovorax paradoxus (strain S110).